The sequence spans 937 residues: Translation initiation factor IF-2 (937 aa).

Residues Arg47 to Leu352 are disordered. Low complexity predominate over residues Thr52–Lys68. Polar residues predominate over residues Gln97 to Gly116. Low complexity predominate over residues Gln117 to Ser153. A compositionally biased stretch (polar residues) spans Ala154–Ala169. Residues Arg173–Asn197 are compositionally biased toward basic and acidic residues. The span at Thr202–Pro229 shows a compositional bias: polar residues. Positions Ser240–Arg269 are enriched in low complexity. Over residues Gln274–Lys298 the composition is skewed to polar residues. The segment covering Phe322–Lys331 has biased composition (basic residues). A compositionally biased stretch (basic and acidic residues) spans Ala339–Leu352. Residues Ser438–Lys607 form the tr-type G domain. Residues Gly447–Thr454 are G1. GTP is bound at residue Gly447–Thr454. The interval Gly472–His476 is G2. The interval Asp493–Gly496 is G3. GTP-binding positions include Asp493–His497 and Asn547–Asp550. Positions Asn547–Asp550 are G4. The segment at Ser583–Lys585 is G5.

The protein belongs to the TRAFAC class translation factor GTPase superfamily. Classic translation factor GTPase family. IF-2 subfamily.

It localises to the cytoplasm. Functionally, one of the essential components for the initiation of protein synthesis. Protects formylmethionyl-tRNA from spontaneous hydrolysis and promotes its binding to the 30S ribosomal subunits. Also involved in the hydrolysis of GTP during the formation of the 70S ribosomal complex. The chain is Translation initiation factor IF-2 from Latilactobacillus sakei subsp. sakei (strain 23K) (Lactobacillus sakei subsp. sakei).